The primary structure comprises 248 residues: 3-deoxy-manno-octulosonate cytidylyltransferase (248 aa).

The protein belongs to the KdsB family.

Its subcellular location is the cytoplasm. It carries out the reaction 3-deoxy-alpha-D-manno-oct-2-ulosonate + CTP = CMP-3-deoxy-beta-D-manno-octulosonate + diphosphate. Its pathway is nucleotide-sugar biosynthesis; CMP-3-deoxy-D-manno-octulosonate biosynthesis; CMP-3-deoxy-D-manno-octulosonate from 3-deoxy-D-manno-octulosonate and CTP: step 1/1. It participates in bacterial outer membrane biogenesis; lipopolysaccharide biosynthesis. Functionally, activates KDO (a required 8-carbon sugar) for incorporation into bacterial lipopolysaccharide in Gram-negative bacteria. The protein is 3-deoxy-manno-octulosonate cytidylyltransferase of Shigella flexneri.